Consider the following 333-residue polypeptide: Nuclear egress protein 1 (333 aa).

The segment at 45 to 64 (SRRYKSVSRSGPSMRVRSRT) is disordered. Residues 128 to 251 (CLSLSGMGYH…YVIFPGKSVH (124 aa)) form a CCCH-type zinc finger.

Belongs to the herpesviridae NEC1 protein family. Forms a heterohexameric complex with NEC2. Interacts with capsid vertex specific component 2/CVC2; this interaction directs the capsid to the host inner nuclear membrane to initiate budding. Phosphorylated at serine residues in the N-terminus. This phosphorylation regulates the localization within the inner nuclear membrane.

The protein localises to the host nucleus inner membrane. Functionally, plays an essential role in virion nuclear egress, the first step of virion release from infected cell. Within the host nucleus, NEC1 interacts with the newly formed capsid through the vertexes and directs it to the inner nuclear membrane by associating with NEC2. Induces the budding of the capsid at the inner nuclear membrane as well as its envelopment into the perinuclear space. There, the NEC1/NEC2 complex promotes the fusion of the enveloped capsid with the outer nuclear membrane and the subsequent release of the viral capsid into the cytoplasm where it will reach the secondary budding sites in the host Golgi or trans-Golgi network. The protein is Nuclear egress protein 1 of Varicella-zoster virus (strain Dumas) (HHV-3).